Reading from the N-terminus, the 950-residue chain is UvrABC system protein A (950 aa).

42–49 (GLSGSGKS) lines the ATP pocket. The C4-type zinc finger occupies 262-289 (CPVCSYSLPELEPRLFSFNNPMGSCPTC). ABC transporter domains are found at residues 319–596 (WDKR…EKSV) and 616–945 (VNPG…KYLK). 649–656 (GVSGSGKS) is an ATP binding site. Residues 748–774 (CEACQGDGVIKVEMHFLPDVYVPCEVC) form a C4-type zinc finger.

It belongs to the ABC transporter superfamily. UvrA family. As to quaternary structure, forms a heterotetramer with UvrB during the search for lesions.

It localises to the cytoplasm. The UvrABC repair system catalyzes the recognition and processing of DNA lesions. UvrA is an ATPase and a DNA-binding protein. A damage recognition complex composed of 2 UvrA and 2 UvrB subunits scans DNA for abnormalities. When the presence of a lesion has been verified by UvrB, the UvrA molecules dissociate. This Neisseria gonorrhoeae protein is UvrABC system protein A.